The primary structure comprises 123 residues: Putative acidic leucine-rich nuclear phosphoprotein 32 family member C (123 aa).

4 LRR repeats span residues 43-64 (ELEFLSTINVGLTFISNLPKLN), 65-87 (KLKKLELSENRISGDLEVLAEKC), 89-110 (NLKHLNLSGNKIKDLSTIELLK), and 114-123 (NLKSLDLFNC).

The protein belongs to the ANP32 family.

The protein is Putative acidic leucine-rich nuclear phosphoprotein 32 family member C (Anp32c) of Mus musculus (Mouse).